The primary structure comprises 82 residues: Small ribosomal subunit protein uS17 (82 aa).

This sequence belongs to the universal ribosomal protein uS17 family. As to quaternary structure, part of the 30S ribosomal subunit.

Functionally, one of the primary rRNA binding proteins, it binds specifically to the 5'-end of 16S ribosomal RNA. The protein is Small ribosomal subunit protein uS17 of Shewanella amazonensis (strain ATCC BAA-1098 / SB2B).